Consider the following 576-residue polypeptide: V-type ATP synthase alpha chain (576 aa).

238 to 245 (GPFGAGKT) serves as a coordination point for ATP.

The protein belongs to the ATPase alpha/beta chains family.

It carries out the reaction ATP + H2O + 4 H(+)(in) = ADP + phosphate + 5 H(+)(out). Functionally, produces ATP from ADP in the presence of a proton gradient across the membrane. The V-type alpha chain is a catalytic subunit. In Borrelia duttonii (strain Ly), this protein is V-type ATP synthase alpha chain.